The sequence spans 533 residues: Glucose-6-phosphate isomerase (533 aa).

The active-site Proton donor is the Glu-330. Catalysis depends on residues His-359 and Lys-461.

The protein belongs to the GPI family.

It localises to the cytoplasm. The enzyme catalyses alpha-D-glucose 6-phosphate = beta-D-fructose 6-phosphate. The protein operates within carbohydrate biosynthesis; gluconeogenesis. It functions in the pathway carbohydrate degradation; glycolysis; D-glyceraldehyde 3-phosphate and glycerone phosphate from D-glucose: step 2/4. Its function is as follows. Catalyzes the reversible isomerization of glucose-6-phosphate to fructose-6-phosphate. This chain is Glucose-6-phosphate isomerase, found in Prochlorococcus marinus (strain SARG / CCMP1375 / SS120).